The sequence spans 297 residues: Carbamate kinase (297 aa).

Belongs to the carbamate kinase family.

It localises to the cytoplasm. The enzyme catalyses hydrogencarbonate + NH4(+) + ATP = carbamoyl phosphate + ADP + H2O + H(+). The catalysed reaction is carbamate + ATP = carbamoyl phosphate + ADP. It carries out the reaction hydrogencarbonate + NH4(+) = carbamate + H2O + H(+). Its pathway is nitrogen metabolism; (S)-allantoin degradation. In terms of biological role, kinase involved in the anaerobic nitrogen utilization via the assimilation of allantoin. Catalyzes the transfer of a phosphate group from carbamoyl phosphate to ADP to produce ATP and leave carbamate, which spontaneously hydrolyzes to ammonia and hydrogencarbonate. This chain is Carbamate kinase, found in Escherichia coli (strain K12).